Consider the following 70-residue polypeptide: MTQKDWGEENQGMLTGATWLDECQSAYLWGRKPRHSWADPPESLDNWSFKTHPFHPWRINFTLTPPPETP.

This is an uncharacterized protein from Torque teno tamarin virus (isolate So-TTV2).